The following is a 209-amino-acid chain: Uracil phosphoribosyltransferase (209 aa).

5-phospho-alpha-D-ribose 1-diphosphate is bound by residues R79, R104, and 131–139 (DPMLATGNS). Uracil is bound by residues I194 and 199–201 (GDA). Residue D200 participates in 5-phospho-alpha-D-ribose 1-diphosphate binding.

This sequence belongs to the UPRTase family. Requires Mg(2+) as cofactor.

It carries out the reaction UMP + diphosphate = 5-phospho-alpha-D-ribose 1-diphosphate + uracil. Its pathway is pyrimidine metabolism; UMP biosynthesis via salvage pathway; UMP from uracil: step 1/1. Its activity is regulated as follows. Allosterically activated by GTP. In terms of biological role, catalyzes the conversion of uracil and 5-phospho-alpha-D-ribose 1-diphosphate (PRPP) to UMP and diphosphate. The sequence is that of Uracil phosphoribosyltransferase from Variovorax paradoxus (strain S110).